A 715-amino-acid chain; its full sequence is Fatty acid oxidation complex subunit alpha (715 aa).

The enoyl-CoA hydratase/isomerase stretch occupies residues 1-190 (MIYEGKAITV…KVGAVDAVVA (190 aa)). Asp297 lines the substrate pocket. The 3-hydroxyacyl-CoA dehydrogenase stretch occupies residues 312–715 (HDVKQAAVLG…MAKNGQRFFN (404 aa)). NAD(+)-binding positions include Met325, Asp344, 401–403 (VVE), Lys408, and Ser430. His451 functions as the For 3-hydroxyacyl-CoA dehydrogenase activity in the catalytic mechanism. Position 454 (Asn454) interacts with NAD(+). Substrate contacts are provided by Asn501 and Tyr660.

The protein in the N-terminal section; belongs to the enoyl-CoA hydratase/isomerase family. It in the C-terminal section; belongs to the 3-hydroxyacyl-CoA dehydrogenase family. Heterotetramer of two alpha chains (FadB) and two beta chains (FadA).

It carries out the reaction a (3S)-3-hydroxyacyl-CoA + NAD(+) = a 3-oxoacyl-CoA + NADH + H(+). It catalyses the reaction a (3S)-3-hydroxyacyl-CoA = a (2E)-enoyl-CoA + H2O. The enzyme catalyses a 4-saturated-(3S)-3-hydroxyacyl-CoA = a (3E)-enoyl-CoA + H2O. The catalysed reaction is (3S)-3-hydroxybutanoyl-CoA = (3R)-3-hydroxybutanoyl-CoA. It carries out the reaction a (3Z)-enoyl-CoA = a 4-saturated (2E)-enoyl-CoA. It catalyses the reaction a (3E)-enoyl-CoA = a 4-saturated (2E)-enoyl-CoA. The protein operates within lipid metabolism; fatty acid beta-oxidation. Functionally, involved in the aerobic and anaerobic degradation of long-chain fatty acids via beta-oxidation cycle. Catalyzes the formation of 3-oxoacyl-CoA from enoyl-CoA via L-3-hydroxyacyl-CoA. It can also use D-3-hydroxyacyl-CoA and cis-3-enoyl-CoA as substrate. This is Fatty acid oxidation complex subunit alpha from Pseudomonas entomophila (strain L48).